Here is an 847-residue protein sequence, read N- to C-terminus: Leucine--tRNA ligase (847 aa).

A 'HIGH' region motif is present at residues 43–53 (PYPSGKLHMGH). Positions 607–611 (KMSKS) match the 'KMSKS' region motif. Residue Lys610 coordinates ATP.

This sequence belongs to the class-I aminoacyl-tRNA synthetase family.

The protein localises to the cytoplasm. It catalyses the reaction tRNA(Leu) + L-leucine + ATP = L-leucyl-tRNA(Leu) + AMP + diphosphate. The polypeptide is Leucine--tRNA ligase (Buchnera aphidicola subsp. Cinara cedri (strain Cc)).